Reading from the N-terminus, the 355-residue chain is 3-dehydroquinate synthase (355 aa).

Residues 71-76 (EGEASK), 105-109 (GVVGD), 129-130 (TS), K142, and K151 contribute to the NAD(+) site. Zn(2+) is bound by residues E184, H246, and H263.

Belongs to the sugar phosphate cyclases superfamily. Dehydroquinate synthase family. Requires Co(2+) as cofactor. The cofactor is Zn(2+). NAD(+) is required as a cofactor.

The protein localises to the cytoplasm. The enzyme catalyses 7-phospho-2-dehydro-3-deoxy-D-arabino-heptonate = 3-dehydroquinate + phosphate. It participates in metabolic intermediate biosynthesis; chorismate biosynthesis; chorismate from D-erythrose 4-phosphate and phosphoenolpyruvate: step 2/7. Catalyzes the conversion of 3-deoxy-D-arabino-heptulosonate 7-phosphate (DAHP) to dehydroquinate (DHQ). The sequence is that of 3-dehydroquinate synthase from Streptococcus sanguinis (strain SK36).